Here is a 354-residue protein sequence, read N- to C-terminus: Rhodopsin (354 aa).

Residues 1–36 lie on the Extracellular side of the membrane; sequence MNGTEGPNFYVPMSNKTGVVRSPFDYPQYYLAEPWQ. N-linked (GlcNAc...) asparagine glycosylation is found at Asn-2 and Asn-15. The chain crosses the membrane as a helical span at residues 37-61; sequence YSALAAYMFLLILLGLPINFMTLFV. Residues 62 to 73 lie on the Cytoplasmic side of the membrane; the sequence is TIQHKKLRTPLN. Residues 74–96 traverse the membrane as a helical segment; it reads YILLNLVFANHFMVLCGFTVTMY. Topologically, residues 97 to 110 are extracellular; it reads TSMHGYFIFGPTGC. Cys-110 and Cys-187 form a disulfide bridge. A helical membrane pass occupies residues 111-133; it reads YIEGFFATLGGEVALWSLVVLAV. Residues 134-136 carry the 'Ionic lock' involved in activated form stabilization motif; it reads ERY. At 134–152 the chain is on the cytoplasmic side; sequence ERYIVVCKPMANFRFGENH. The chain crosses the membrane as a helical span at residues 153-173; sequence AIMGVAFTWIMALSCAAPPLF. Over 174 to 202 the chain is Extracellular; it reads GWSRYIPEGMQCSCGVDYYTLKPEVNNES. The helical transmembrane segment at 203–224 threads the bilayer; that stretch reads FVIYMFIVHFTIPLIVIFFCYG. Topologically, residues 225–252 are cytoplasmic; it reads RLLCTVKEAAAQQQESLTTQKAEKEVTR. A helical transmembrane segment spans residues 253–274; sequence MVVIMVVFFLICWVPYAYVAFY. At 275–286 the chain is on the extracellular side; the sequence is IFTHQGSNFGPV. A helical membrane pass occupies residues 287-308; it reads FMTVPAFFAKSSAIYNPVIYIV. Lys-296 is subject to N6-(retinylidene)lysine. At 309 to 354 the chain is on the cytoplasmic side; the sequence is LNKQFRNCLITTLCCGKNPFGDEDGSSAATSKTEASSVSSSQVSPA. Residues Cys-322 and Cys-323 are each lipidated (S-palmitoyl cysteine). The disordered stretch occupies residues 331 to 354; the sequence is EDGSSAATSKTEASSVSSSQVSPA. The segment covering 334–354 has biased composition (low complexity); sequence SSAATSKTEASSVSSSQVSPA.

Belongs to the G-protein coupled receptor 1 family. Opsin subfamily. In terms of processing, contains one covalently linked retinal chromophore. Upon light absorption, the covalently bound 11-cis-retinal is converted to all-trans-retinal. After hydrolysis of the Schiff base and release of the covalently bound all-trans-retinal, active rhodopsin is regenerated by binding of a fresh molecule of 11-cis-retinal.

Its subcellular location is the membrane. It localises to the cell projection. It is found in the cilium. The protein localises to the photoreceptor outer segment. Its function is as follows. Photoreceptor required for image-forming vision at low light intensity. Required for photoreceptor cell viability after birth. Light-induced isomerization of 11-cis to all-trans retinal triggers a conformational change that activates signaling via G-proteins. Subsequent receptor phosphorylation mediates displacement of the bound G-protein alpha subunit by arrestin and terminates signaling. The chain is Rhodopsin (rho) from Xenopus laevis (African clawed frog).